Here is a 223-residue protein sequence, read N- to C-terminus: Putative HTLV-1-related endogenous sequence (223 aa).

The segment covering 1-19 (MRCAHAPAPRTRYPTRAPS) has biased composition (low complexity). The segment at 1 to 184 (MRCAHAPAPR…ARAHGEAGAG (184 aa)) is disordered. The segment covering 115-126 (GDRRREGPDRSP) has biased composition (basic and acidic residues). The segment covering 133–157 (PAAAAQPDSSSAQAPGPSTLRPAAT) has biased composition (low complexity).

This is Putative HTLV-1-related endogenous sequence (HRES1) from Homo sapiens (Human).